Consider the following 155-residue polypeptide: Small ribosomal subunit protein uS7 (155 aa).

Belongs to the universal ribosomal protein uS7 family. Part of the 30S ribosomal subunit. Contacts proteins S9 and S11.

One of the primary rRNA binding proteins, it binds directly to 16S rRNA where it nucleates assembly of the head domain of the 30S subunit. Is located at the subunit interface close to the decoding center, probably blocks exit of the E-site tRNA. The protein is Small ribosomal subunit protein uS7 of Xanthomonas axonopodis pv. citri (strain 306).